A 1613-amino-acid polypeptide reads, in one-letter code: Vitellogenin-2 (1613 aa).

An N-terminal signal peptide occupies residues 1–15 (MRSIIIASLVALALA). Residues 24-687 (FEPKTDYHYK…EKNSFLPKDL (664 aa)) enclose the Vitellogenin domain. An N-linked (GlcNAc...) asparagine glycan is attached at Asn1268. One can recognise a VWFD domain in the interval 1308-1477 (SVCKVQKNQI…SYLLKNEECE (170 aa)). Intrachain disulfides connect Cys1310–Cys1440 and Cys1332–Cys1476. Residues 1491–1531 (KYERDEEQSDEYSSEETYDYEQENTKKSQKNQRSQKKSDLV) are disordered. Positions 1495–1512 (DEEQSDEYSSEETYDYEQ) are enriched in acidic residues.

Expressed in the intestine of adult hermaphrodites.

The protein localises to the secreted. Functionally, precursor of the egg-yolk proteins that are sources of nutrients during embryonic development. Together with other vitellogenins, may play a role in modulating life-span, acting via induction of autophagy and lysosomal lipolysis. The protein is Vitellogenin-2 (vit-2) of Caenorhabditis elegans.